Reading from the N-terminus, the 106-residue chain is Large ribosomal subunit protein bL21 (106 aa).

It belongs to the bacterial ribosomal protein bL21 family. As to quaternary structure, part of the 50S ribosomal subunit. Contacts protein L20.

Its function is as follows. This protein binds to 23S rRNA in the presence of protein L20. The polypeptide is Large ribosomal subunit protein bL21 (Xanthomonas campestris pv. campestris (strain ATCC 33913 / DSM 3586 / NCPPB 528 / LMG 568 / P 25)).